Here is a 206-residue protein sequence, read N- to C-terminus: MAANKPKGQNSLALHKVIMVGSGGVGKSALTLQFMYDEFVEDYEPTKADSYRKKVVLDGEEVQIDILDTAGQEDYAAIRDNYFRSGEGFLCVFSITEMESFAATADFREQILRVKEDENVPFLLVGNKSDLEDKRQVSVEEAKNRADQWNVNYVETSAKTRANVDKVFFDLMREIRARKMEDSKEKNGKKKRKSLAKRIRERCCIL.

Residue 21 to 28 (GSGGVGKS) participates in GTP binding. Residues 43-51 (YEPTKADSY) carry the Effector region motif. Residues 68–72 (DTAGQ) and 127–130 (NKSD) contribute to the GTP site. Position 194 is a phosphoserine (Ser-194). Cysteine methyl ester is present on Cys-203. Cys-203 carries the S-geranylgeranyl cysteine lipid modification. The propeptide at 204 to 206 (CIL) is removed in mature form.

It belongs to the small GTPase superfamily. Ras family. Interacts (via effector domain) with RALBP1; during mitosis, recruits RALBP1 to the mitochondrion where it promotes DNM1L phosphorylation and mitochondrial fission. Interacts with EXOC2/Sec5 and EXOC8/Exo84; binding to EXOC2 and EXOC8 is mutually exclusive. Interacts with Clostridium exoenzyme C3. Interacts with RALGPS1. Interacts with LPAR1 and LPAR2. Interacts with GRK2 in response to LPAR1 activation. RALA and GRK2 binding to LPAR1 is mutually exclusive. Interacts with CDC42. Post-translationally, prenylation is essential for membrane localization. Phosphorylated. Phosphorylation at Ser-194 by AURKA/Aurora kinase A, during mitosis, induces RALA localization to the mitochondrion where it regulates mitochondrial fission.

The protein resides in the cell membrane. Its subcellular location is the cleavage furrow. It is found in the midbody. The protein localises to the midbody ring. It localises to the mitochondrion. It catalyses the reaction GTP + H2O = GDP + phosphate + H(+). Its activity is regulated as follows. Alternates between an inactive form bound to GDP and an active form bound to GTP. Activated by a guanine nucleotide-exchange factor (GEF) and inactivated by a GTPase-activating protein (GAP). Multifunctional GTPase involved in a variety of cellular processes including gene expression, cell migration, cell proliferation, oncogenic transformation and membrane trafficking. Accomplishes its multiple functions by interacting with distinct downstream effectors. Acts as a GTP sensor for GTP-dependent exocytosis of dense core vesicles. Key regulator of LPAR1 signaling and competes with GRK2 for binding to LPAR1 thus affecting the signaling properties of the receptor. Required for anchorage-independent proliferation of transformed cells. The RALA-exocyst complex regulates integrin-dependent membrane raft exocytosis and growth signaling. During mitosis, supports the stabilization and elongation of the intracellular bridge between dividing cells. Cooperates with EXOC2 to recruit other components of the exocyst to the early midbody. During mitosis, also controls mitochondrial fission by recruiting to the mitochondrion RALBP1, which mediates the phosphorylation and activation of DNM1L by the mitotic kinase cyclin B-CDK1. The polypeptide is Ras-related protein Ral-A (Rala) (Mus musculus (Mouse)).